We begin with the raw amino-acid sequence, 325 residues long: Cell wall mannoprotein PIR3 (325 aa).

The signal sequence occupies residues 1–18 (MQYKKPLVVSALAATSLA). Residues 19–67 (AYAPKDPWSTLTPSATYKGGITDYSSSFGIAIEAVATSASSVASSKAKR) constitute a propeptide that is removed on maturation. 8 PIR1/2/3 repeats span residues 68-91 (AASQIGDGQVQAATTTAAVSKKST), 92-109 (AAAVSQITDGQVQAAKST), 110-127 (AAAVSQITDGQVQAAKST), 128-145 (AAAVSQITDGQVQAAKST), 146-163 (AAAVSQITDGQVQAAKST), 164-181 (AAAASQISDGQVQATTST), 182-199 (KAAASQITDGQIQASKTT), and 200-217 (SGASQVSDGQVQATAEVK).

This sequence belongs to the PIR protein family. Covalently linked to beta-1,3-glucan of the inner cell wall layer via an alkali-sensitive ester linkage between the gamma-carboxyl group of glutamic acids, arising from specific glutamines within the PIR1/2/3 repeats, and hydroxyl groups of glucoses of beta-1,3-glucan chains. Post-translationally, O-glycosylated. Extensively O-mannosylated.

It is found in the secreted. Its subcellular location is the cell wall. In terms of biological role, component of the outer cell wall layer. Required for stability of the cell wall and for optimal growth. Required for resistance against several antifungal and cell wall-perturbing agents. The sequence is that of Cell wall mannoprotein PIR3 (PIR3) from Saccharomyces cerevisiae (strain ATCC 204508 / S288c) (Baker's yeast).